We begin with the raw amino-acid sequence, 444 residues long: tRNA modification GTPase MnmE (444 aa).

The (6S)-5-formyl-5,6,7,8-tetrahydrofolate site is built by R23, E82, and K121. The 150-residue stretch at G216–N365 folds into the TrmE-type G domain. N226 serves as a coordination point for K(+). GTP is bound by residues N226 to S231, T245 to T251, and D270 to G273. Residue S230 participates in Mg(2+) binding. The K(+) site is built by T245, I247, and T250. T251 provides a ligand contact to Mg(2+). K444 is a binding site for (6S)-5-formyl-5,6,7,8-tetrahydrofolate.

Belongs to the TRAFAC class TrmE-Era-EngA-EngB-Septin-like GTPase superfamily. TrmE GTPase family. In terms of assembly, homodimer. Heterotetramer of two MnmE and two MnmG subunits. The cofactor is K(+).

The protein resides in the cytoplasm. In terms of biological role, exhibits a very high intrinsic GTPase hydrolysis rate. Involved in the addition of a carboxymethylaminomethyl (cmnm) group at the wobble position (U34) of certain tRNAs, forming tRNA-cmnm(5)s(2)U34. This Chlamydia trachomatis serovar L2 (strain ATCC VR-902B / DSM 19102 / 434/Bu) protein is tRNA modification GTPase MnmE.